A 154-amino-acid chain; its full sequence is Superoxide dismutase [Cu-Zn] (154 aa).

Residues His47, His49, and His64 each contribute to the Cu cation site. The cysteines at positions 58 and 147 are disulfide-linked. Zn(2+) contacts are provided by His64, His72, His81, and Asp84. His121 is a binding site for Cu cation. Arg144 contacts substrate.

Belongs to the Cu-Zn superoxide dismutase family. Homodimer. The cofactor is Cu cation. Zn(2+) is required as a cofactor.

It localises to the cytoplasm. The catalysed reaction is 2 superoxide + 2 H(+) = H2O2 + O2. Functionally, destroys radicals which are normally produced within the cells and which are toxic to biological systems. The sequence is that of Superoxide dismutase [Cu-Zn] (sod1) from Schizosaccharomyces pombe (strain 972 / ATCC 24843) (Fission yeast).